A 721-amino-acid chain; its full sequence is Fatty acid oxidation complex subunit alpha (721 aa).

Residues 1 to 190 form an enoyl-CoA hydratase/isomerase region; it reads MIYEGKAITV…KVGAVDAVVA (190 aa). Asp-297 provides a ligand contact to substrate. Positions 312 to 721 are 3-hydroxyacyl-CoA dehydrogenase; it reads KDVKQAAVLG…SFFGQASSEE (410 aa). NAD(+) is bound by residues Met-325, Asp-344, 401–403, Lys-408, and Ser-430; that span reads VVE. His-451 serves as the catalytic For 3-hydroxyacyl-CoA dehydrogenase activity. Asn-454 contributes to the NAD(+) binding site. Residues Asn-501 and Tyr-660 each contribute to the substrate site.

In the N-terminal section; belongs to the enoyl-CoA hydratase/isomerase family. The protein in the C-terminal section; belongs to the 3-hydroxyacyl-CoA dehydrogenase family. As to quaternary structure, heterotetramer of two alpha chains (FadB) and two beta chains (FadA).

The catalysed reaction is a (3S)-3-hydroxyacyl-CoA + NAD(+) = a 3-oxoacyl-CoA + NADH + H(+). It catalyses the reaction a (3S)-3-hydroxyacyl-CoA = a (2E)-enoyl-CoA + H2O. It carries out the reaction a 4-saturated-(3S)-3-hydroxyacyl-CoA = a (3E)-enoyl-CoA + H2O. The enzyme catalyses (3S)-3-hydroxybutanoyl-CoA = (3R)-3-hydroxybutanoyl-CoA. The catalysed reaction is a (3Z)-enoyl-CoA = a 4-saturated (2E)-enoyl-CoA. It catalyses the reaction a (3E)-enoyl-CoA = a 4-saturated (2E)-enoyl-CoA. It functions in the pathway lipid metabolism; fatty acid beta-oxidation. Its function is as follows. Involved in the aerobic and anaerobic degradation of long-chain fatty acids via beta-oxidation cycle. Catalyzes the formation of 3-oxoacyl-CoA from enoyl-CoA via L-3-hydroxyacyl-CoA. It can also use D-3-hydroxyacyl-CoA and cis-3-enoyl-CoA as substrate. The polypeptide is Fatty acid oxidation complex subunit alpha (Pseudomonas savastanoi pv. phaseolicola (strain 1448A / Race 6) (Pseudomonas syringae pv. phaseolicola (strain 1448A / Race 6))).